A 245-amino-acid chain; its full sequence is tRNA pseudouridine synthase A (245 aa).

Residue Asp52 is the Nucleophile of the active site. Tyr111 contacts substrate.

Belongs to the tRNA pseudouridine synthase TruA family. In terms of assembly, homodimer.

The enzyme catalyses uridine(38/39/40) in tRNA = pseudouridine(38/39/40) in tRNA. Functionally, formation of pseudouridine at positions 38, 39 and 40 in the anticodon stem and loop of transfer RNAs. The protein is tRNA pseudouridine synthase A of Afipia carboxidovorans (strain ATCC 49405 / DSM 1227 / KCTC 32145 / OM5) (Oligotropha carboxidovorans).